Here is a 183-residue protein sequence, read N- to C-terminus: MNTEAAGRRVHVIQGEFKVVNDPDIVLSTILGSCVAACMRDPAAGVGGMNHFLLPGSATSPSSGADATRYGVHLMELLINGLLKQGARRDRLEAKIFGGARTIARFSNVGEQNAAFARQFLMDEGIRIVGESTGGDHGRKLEYWPSSGRARQYALTGVEAQRALQMDQRPAVPKPAESPIEFF.

It belongs to the CheD family.

The enzyme catalyses L-glutaminyl-[protein] + H2O = L-glutamyl-[protein] + NH4(+). In terms of biological role, probably deamidates glutamine residues to glutamate on methyl-accepting chemotaxis receptors (MCPs), playing an important role in chemotaxis. The sequence is that of Probable chemoreceptor glutamine deamidase CheD from Rhizobium meliloti (strain 1021) (Ensifer meliloti).